Reading from the N-terminus, the 375-residue chain is Trichodiene synthase (375 aa).

Belongs to the trichodiene synthase family.

It catalyses the reaction (2E,6E)-farnesyl diphosphate = trichodiene + diphosphate. The protein operates within sesquiterpene biosynthesis; trichothecene biosynthesis. TS is a member of the terpene cyclase group of enzymes. It catalyzes the isomerization and cyclization of farnesyl pyro-phosphate to form trichodiene, the first cyclic intermediate in the biosynthetic pathway for trichothecenes. It serves to branch trichothecene biosynthesis from the isoprenoid pathway. The polypeptide is Trichodiene synthase (TRI5) (Fusarium boothii).